The chain runs to 442 residues: tRNA(Ile)-lysidine synthase (442 aa).

30-35 is an ATP binding site; it reads SGGLDS.

The protein belongs to the tRNA(Ile)-lysidine synthase family.

It localises to the cytoplasm. It carries out the reaction cytidine(34) in tRNA(Ile2) + L-lysine + ATP = lysidine(34) in tRNA(Ile2) + AMP + diphosphate + H(+). Its function is as follows. Ligates lysine onto the cytidine present at position 34 of the AUA codon-specific tRNA(Ile) that contains the anticodon CAU, in an ATP-dependent manner. Cytidine is converted to lysidine, thus changing the amino acid specificity of the tRNA from methionine to isoleucine. This Pseudomonas fluorescens (strain Pf0-1) protein is tRNA(Ile)-lysidine synthase.